The chain runs to 118 residues: Heavy metal-associated isoprenylated plant protein 12 (118 aa).

An HMA domain is found at 1–65; sequence MQVVVLKLDV…KICHTEFISV (65 aa). The segment at 68–87 is disordered; sequence VKEPEKKKPDDPKKPETKPP. Positions 69–86 are enriched in basic and acidic residues; the sequence is KEPEKKKPDDPKKPETKP. Cysteine 115 carries the cysteine methyl ester modification. Cysteine 115 carries S-farnesyl cysteine lipidation. Positions 116–118 are cleaved as a propeptide — removed in mature form; the sequence is VTS.

It belongs to the HIPP family.

In terms of biological role, probable heavy-metal-binding protein. This Arabidopsis thaliana (Mouse-ear cress) protein is Heavy metal-associated isoprenylated plant protein 12.